We begin with the raw amino-acid sequence, 439 residues long: Niacin transporter NiaP (439 aa).

A run of 12 helical transmembrane segments spans residues 20-40 (LWVV…IAFI), 57-77 (WIVS…GGLA), 84-104 (TVFA…AFAP), 108-128 (WLLA…PVAV), 143-163 (FIVL…LVSY), 169-189 (FGWH…YVII), 253-273 (LMLW…FTWL), 288-308 (FEYV…AAWL), 316-336 (ATLA…GQAD), 338-358 (VFNI…AWGV), 374-394 (FGAG…PIVV), and 407-427 (VFMM…ILGE).

It belongs to the major facilitator superfamily. Sugar transporter (TC 2.A.1.1) family.

It is found in the cell inner membrane. Its function is as follows. Functions as a high-affinity transporter of niacin (nicotinamide or nicotinate). Probably substantially contributes to niacin transport when its concentration in the medium is very low. In Acinetobacter baylyi (strain ATCC 33305 / BD413 / ADP1), this protein is Niacin transporter NiaP.